Here is a 236-residue protein sequence, read N- to C-terminus: Pyridoxal 5'-phosphate synthase subunit PdxT (236 aa).

61–63 (GES) is an L-glutamine binding site. The active-site Nucleophile is Cys93. L-glutamine contacts are provided by residues Arg127 and 163-164 (IR). Catalysis depends on charge relay system residues His215 and Glu217.

This sequence belongs to the glutaminase PdxT/SNO family. As to quaternary structure, in the presence of PdxS, forms a dodecamer of heterodimers. Only shows activity in the heterodimer.

It carries out the reaction aldehydo-D-ribose 5-phosphate + D-glyceraldehyde 3-phosphate + L-glutamine = pyridoxal 5'-phosphate + L-glutamate + phosphate + 3 H2O + H(+). It catalyses the reaction L-glutamine + H2O = L-glutamate + NH4(+). It functions in the pathway cofactor biosynthesis; pyridoxal 5'-phosphate biosynthesis. In terms of biological role, catalyzes the hydrolysis of glutamine to glutamate and ammonia as part of the biosynthesis of pyridoxal 5'-phosphate. The resulting ammonia molecule is channeled to the active site of PdxS. This chain is Pyridoxal 5'-phosphate synthase subunit PdxT, found in Arthrobacter sp. (strain FB24).